Reading from the N-terminus, the 166-residue chain is MEWRYFVVIALICPLIIVETLAVSDCVRHVSESARNTVCDVRQYRVTKGVEADRYVQCFMTALGFADESGSIQRSNVLTALDAVETHDGVYTDAVDVCLSKAKKLPGTERSGSFFSCMLRTESAQNFRDAVELQELRVASKWPEGERFDRSKVQLMMRELNSQLRC.

The first 22 residues, 1-22 (MEWRYFVVIALICPLIIVETLA), serve as a signal peptide directing secretion. Intrachain disulfides connect Cys-26-Cys-58, Cys-39-Cys-166, and Cys-98-Cys-117.

This sequence belongs to the PBP/GOBP family.

Its subcellular location is the secreted. Its function is as follows. In contrast to the related D7 salivary proteins, does not bind biogenic amines such as serotonin, noradrenaline, histamine and adrenaline. It is hypothesized that either D7r5 evolved an as yet unknown function or is becoming a pseudogene. This Anopheles gambiae (African malaria mosquito) protein is Short form salivary protein D7R5.